An 878-amino-acid chain; its full sequence is Alanine--tRNA ligase (878 aa).

Zn(2+) is bound by residues histidine 566, histidine 570, cysteine 668, and histidine 672.

It belongs to the class-II aminoacyl-tRNA synthetase family. It depends on Zn(2+) as a cofactor.

It localises to the cytoplasm. It carries out the reaction tRNA(Ala) + L-alanine + ATP = L-alanyl-tRNA(Ala) + AMP + diphosphate. Catalyzes the attachment of alanine to tRNA(Ala) in a two-step reaction: alanine is first activated by ATP to form Ala-AMP and then transferred to the acceptor end of tRNA(Ala). Also edits incorrectly charged Ser-tRNA(Ala) and Gly-tRNA(Ala) via its editing domain. The sequence is that of Alanine--tRNA ligase from Bacillus subtilis (strain 168).